A 286-amino-acid chain; its full sequence is ATP synthase gamma chain (286 aa).

It belongs to the ATPase gamma chain family. In terms of assembly, F-type ATPases have 2 components, CF(1) - the catalytic core - and CF(0) - the membrane proton channel. CF(1) has five subunits: alpha(3), beta(3), gamma(1), delta(1), epsilon(1). CF(0) has three main subunits: a, b and c.

The protein localises to the cell inner membrane. Produces ATP from ADP in the presence of a proton gradient across the membrane. The gamma chain is believed to be important in regulating ATPase activity and the flow of protons through the CF(0) complex. This is ATP synthase gamma chain from Leptospira borgpetersenii serovar Hardjo-bovis (strain JB197).